We begin with the raw amino-acid sequence, 158 residues long: S-ribosylhomocysteine lyase (158 aa).

Histidine 55, histidine 59, and cysteine 127 together coordinate Fe cation.

The protein belongs to the LuxS family. As to quaternary structure, homodimer. It depends on Fe cation as a cofactor.

It catalyses the reaction S-(5-deoxy-D-ribos-5-yl)-L-homocysteine = (S)-4,5-dihydroxypentane-2,3-dione + L-homocysteine. Involved in the synthesis of autoinducer 2 (AI-2) which is secreted by bacteria and is used to communicate both the cell density and the metabolic potential of the environment. The regulation of gene expression in response to changes in cell density is called quorum sensing. Catalyzes the transformation of S-ribosylhomocysteine (RHC) to homocysteine (HC) and 4,5-dihydroxy-2,3-pentadione (DPD). This is S-ribosylhomocysteine lyase from Geobacillus thermodenitrificans (strain NG80-2).